A 562-amino-acid polypeptide reads, in one-letter code: MLHKKPQRANENGISQRKKPSDQDNSSVKEGDVAGVHQLATLLMLLDPSDDVSRILCTDALYQLDRIEEAHKMLSLALSNSSQRSPILSRLALLQFKKGFIYDGNQLIKKVIQIGDTSCLLPIMDIFKEEDRKLMQNHCHAKALSILQSQQGDSYIKEAIAYLSFAIIASGGHAKDSLLARARCYGQLGQKKTAIFDFNAILKDEPYNAEALSGKGFMHLTLNQQKEAVHDICLAIKADASYAIREIHSLKPEAQLIITEWVYNHCRTLLAELLTANNNFQSDPTFNELEVLAEALIKTDNKAAHFHILYTDILIAKEKYDEAFNYLRKSFNGNAIDETVRARYGVLHVKYRNLLVAAQELCTLAGKQPEEVEILVKFMDKRERQSLFQAAGQEGNSLIQENQHEKALDYYSLAVISSNNNPKYLRQRAMCLTHLRDYSSAIKDIDKAILRHSSHDLKTQAEDYCSKGHILLLSCDEDAATTQYMKAISMEHASAVASINNMPGRVKLAGIFSQVANRYFEQRLFEESWKMSECGLLIDENNQELKRLKARIKREASGCIVH.

A disordered region spans residues 1-30; the sequence is MLHKKPQRANENGISQRKKPSDQDNSSVKE. Residues 19 to 30 are compositionally biased toward basic and acidic residues; sequence KPSDQDNSSVKE. 8 TPR repeats span residues 51-84, 175-208, 210-242, 304-337, 388-421, 423-455, 461-494, and 509-542; these read DVSR…SSQR, KDSL…EPYN, EALS…DASY, AHFH…NAID, FQAA…SNNN, KYLR…HSSH, AEDY…EHAS, and AGIF…DENN.

In Xenopus laevis (African clawed frog), this protein is Tetratricopeptide repeat protein 34 (ttc34).